Consider the following 214-residue polypeptide: Guanylate kinase (214 aa).

The 187-residue stretch at Gly-6 to Arg-192 folds into the Guanylate kinase-like domain. Ala-13–Thr-20 serves as a coordination point for ATP.

The protein belongs to the guanylate kinase family.

Its subcellular location is the cytoplasm. The catalysed reaction is GMP + ATP = GDP + ADP. Its function is as follows. Essential for recycling GMP and indirectly, cGMP. The protein is Guanylate kinase of Pseudomonas syringae pv. syringae (strain B728a).